The primary structure comprises 447 residues: Argininosuccinate synthase (447 aa).

Residues 17 to 25 and A43 contribute to the ATP site; that span reads AFSGGLDTS. Y99 provides a ligand contact to L-citrulline. ATP-binding residues include G129 and T131. Residues T131, N135, and D136 each coordinate L-aspartate. Residue N135 coordinates L-citrulline. Residue D136 coordinates ATP. L-citrulline-binding residues include R139 and S192. D194 provides a ligand contact to ATP. Residues T201, E203, and E280 each contribute to the L-citrulline site.

The protein belongs to the argininosuccinate synthase family. Type 2 subfamily. Homotetramer.

The protein localises to the cytoplasm. The enzyme catalyses L-citrulline + L-aspartate + ATP = 2-(N(omega)-L-arginino)succinate + AMP + diphosphate + H(+). Its pathway is amino-acid biosynthesis; L-arginine biosynthesis; L-arginine from L-ornithine and carbamoyl phosphate: step 2/3. The sequence is that of Argininosuccinate synthase from Escherichia coli O139:H28 (strain E24377A / ETEC).